We begin with the raw amino-acid sequence, 239 residues long: Pre-mRNA-splicing factor isy1 (239 aa).

The protein belongs to the ISY1 family. Associated with the spliceosome.

The protein localises to the cytoplasm. Its subcellular location is the nucleus. Functionally, involved in pre-mRNA splicing. This is Pre-mRNA-splicing factor isy1 (msp-7) from Neurospora crassa (strain ATCC 24698 / 74-OR23-1A / CBS 708.71 / DSM 1257 / FGSC 987).